A 185-amino-acid polypeptide reads, in one-letter code: MPKRRLQTTLSEEAFRIIEKFKPDYGGINEVIEAALKLLNREDRNLSEDDILLIRLIRDLDFTGCGRSQYMHLICGDIEKAVKESMMETAVEWFLKKPFAEIELEEFLETVKRGWKVLNRVDYVEITKGDGWIQIFCEHTMRRREVSEFLAMHILNIYEKYYKGEWDVVKSISTNGFTLKFYRRV.

This is an uncharacterized protein from Archaeoglobus fulgidus (strain ATCC 49558 / DSM 4304 / JCM 9628 / NBRC 100126 / VC-16).